Here is a 356-residue protein sequence, read N- to C-terminus: Protein RecA (356 aa).

68 to 75 (GQESSGKT) contacts ATP.

The protein belongs to the RecA family.

The protein localises to the cytoplasm. In terms of biological role, can catalyze the hydrolysis of ATP in the presence of single-stranded DNA, the ATP-dependent uptake of single-stranded DNA by duplex DNA, and the ATP-dependent hybridization of homologous single-stranded DNAs. It interacts with LexA causing its activation and leading to its autocatalytic cleavage. This Thermotoga maritima (strain ATCC 43589 / DSM 3109 / JCM 10099 / NBRC 100826 / MSB8) protein is Protein RecA.